The primary structure comprises 356 residues: Surface presentation of antigens protein SpaS (356 aa).

5 helical membrane-spanning segments follow: residues leucine 29–asparagine 49, leucine 72–cysteine 92, valine 132–cysteine 152, leucine 179–isoleucine 199, and histidine 261–tyrosine 281.

The protein belongs to the type III secretion exporter family.

Its subcellular location is the cell inner membrane. In terms of biological role, involved in a secretory pathway responsible for the surface presentation of determinants needed for the entry of Salmonella species into mammalian cells. This is Surface presentation of antigens protein SpaS (spaS) from Salmonella typhimurium (strain LT2 / SGSC1412 / ATCC 700720).